The sequence spans 596 residues: Mitoguardin 2 (596 aa).

Transmembrane regions (helical) follow at residues 11-31 (IMQALAMTVAEIPVFLYSTFG) and 40-60 (LSPSLKKVLFATALGSVALAL). 2 disordered regions span residues 67–158 (RRGR…AAWE) and 576–596 (ALPKSPCQAESGNLDASGQQD). A compositionally biased stretch (polar residues) spans 110–123 (MSPSTRSNDTLSGV). The span at 124–140 (SSIAQSKHSSSSHSIAS) shows a compositional bias: low complexity. 2 stretches are compositionally biased toward polar residues: residues 143–152 (VPSSPNQSVN) and 583–596 (QAESGNLDASGQQD).

It belongs to the mitoguardin family. Homodimer and heterodimer; forms heterodimers with miga1.

It is found in the mitochondrion outer membrane. Regulator of mitochondrial fusion: acts by forming homo- and heterodimers at the mitochondrial outer membrane and facilitating the formation of pld6/MitoPLD dimers. May act by regulating phospholipid metabolism via pld6/MitoPLD. In Danio rerio (Zebrafish), this protein is Mitoguardin 2.